The following is a 445-amino-acid chain: C4-dicarboxylate transport protein (445 aa).

8 helical membrane-spanning segments follow: residues 24-44 (VLYV…WLSP), 62-82 (LIKM…IAHI), 105-125 (FALV…GLAA), 163-183 (GDIL…MALG), 201-221 (FGVI…AMAF), 234-254 (LIGL…LVLG), 322-342 (IYMT…LSFG), and 370-390 (AGTL…VFSI).

Belongs to the dicarboxylate/amino acid:cation symporter (DAACS) (TC 2.A.23) family.

It is found in the cell inner membrane. In terms of biological role, responsible for the transport of dicarboxylates such as succinate, fumarate, and malate from the periplasm across the membrane. The polypeptide is C4-dicarboxylate transport protein (Rhodopseudomonas palustris (strain ATCC BAA-98 / CGA009)).